Reading from the N-terminus, the 209-residue chain is Uracil phosphoribosyltransferase (209 aa).

5-phospho-alpha-D-ribose 1-diphosphate is bound by residues arginine 79, arginine 104, and aspartate 131 to serine 139. Residues isoleucine 194 and glycine 199 to alanine 201 each bind uracil. Position 200 (aspartate 200) interacts with 5-phospho-alpha-D-ribose 1-diphosphate.

It belongs to the UPRTase family. Homodimer. It depends on Mg(2+) as a cofactor.

The enzyme catalyses UMP + diphosphate = 5-phospho-alpha-D-ribose 1-diphosphate + uracil. It participates in pyrimidine metabolism; UMP biosynthesis via salvage pathway; UMP from uracil: step 1/1. Its activity is regulated as follows. Allosterically activated by GTP. Catalyzes the conversion of uracil and 5-phospho-alpha-D-ribose 1-diphosphate (PRPP) to UMP and diphosphate. The protein is Uracil phosphoribosyltransferase of Bacillus caldolyticus.